The chain runs to 303 residues: Hemolysin E, chromosomal (303 aa).

Cys-87 and Cys-285 form a disulfide bridge. Residues 183–203 traverse the membrane as a helical segment; that stretch reads AGVVAGPFGLIISYSIAAGVV.

Monomer and oligomer. In periplasm, it is present as a monomer, while in outer membrane vesicles, it oligomerizes to form a pore structure that is active. The pore is formed by a dodecamer. In periplasm, it forms a disulfide bond between Cys-87 and Cys-285, which prevents the oligomerization. In outer membrane vesicles, the redox status prevents formation of the disulfide bond, leading to oligomerization and pore formation.

The protein localises to the secreted. It is found in the periplasm. It localises to the host cell membrane. In terms of biological role, toxin, which has some hemolytic activity towards mammalian cells. Acts by forming a pore-like structure upon contact with mammalian cells. This is Hemolysin E, chromosomal (hlyE) from Escherichia coli (strain K12).